We begin with the raw amino-acid sequence, 93 residues long: Leydig cell tumor 10 kDa protein (93 aa).

Positions 1–41 (MAQGQRKFQAQKPKSKAAAAERSRGPRKGGRVIGPKKARVV) are disordered. Low complexity predominate over residues 7-18 (KFQAQKPKSKAA). A compositionally biased stretch (basic residues) spans 25–39 (GPRKGGRVIGPKKAR).

It belongs to the UPF0390 family. In terms of tissue distribution, leydig cell tumor, testis and placenta.

May have a potential role in hypercalcemia of malignancy. This is Leydig cell tumor 10 kDa protein from Rattus norvegicus (Rat).